We begin with the raw amino-acid sequence, 404 residues long: p-hydroxybenzoate hydroxylase (404 aa).

Residues glutamate 35, 45 to 50 (RIRAGI), and glutamine 105 each bind FAD. Substrate is bound by residues tyrosine 203, 214-216 (SMR), and tyrosine 224. Residue aspartate 288 coordinates FAD. Proline 295 lines the substrate pocket. 301 to 302 (LN) contacts FAD.

Belongs to the aromatic-ring hydroxylase family. In terms of assembly, homodimer. It depends on FAD as a cofactor.

The enzyme catalyses 4-hydroxybenzoate + NADPH + O2 + H(+) = 3,4-dihydroxybenzoate + NADP(+) + H2O. It functions in the pathway aromatic compound metabolism; benzoate degradation via hydroxylation; 3,4-dihydroxybenzoate from benzoate: step 2/2. In terms of biological role, catalyzes the incorporation of an atom of dioxygen into p-hydroxybenzoate (p-OHB) to form 3,4-dihydroxybenzoate (3,4DOHB). The reaction occurs in two parts: reduction of the flavin adenine dinucleotide (FAD) in the enzyme by reduced nicotinamide adenine dinucleotide phosphate (NADPH) in response to binding p-hydroxybenzoate to the enzyme and oxidation of reduced FAD with oxygen to form a hydroperoxide, which then oxygenates p-hydroxybenzoate. The chain is p-hydroxybenzoate hydroxylase (pobA) from Acinetobacter baylyi (strain ATCC 33305 / BD413 / ADP1).